The following is a 227-amino-acid chain: Cytochrome c oxidase subunit 2 (227 aa).

At 1–26 (MATWSNFNLQNSASPLMEQIIFFHDH) the chain is on the mitochondrial intermembrane side. The helical transmembrane segment at 27–51 (TLVILIMITILVGYLMISLFFNSYI) threads the bilayer. Topologically, residues 52 to 62 (NRFLLEGQMIE) are mitochondrial matrix. The helical transmembrane segment at 63–81 (LIWTILPAITLIFIALPSL) threads the bilayer. The Mitochondrial intermembrane portion of the chain corresponds to 82–227 (RLLYLLDELN…NFINWINNYS (146 aa)). Residues His161, Cys196, Glu198, Cys200, His204, and Met207 each contribute to the Cu cation site. Mg(2+) is bound at residue Glu198.

This sequence belongs to the cytochrome c oxidase subunit 2 family. In terms of assembly, component of the cytochrome c oxidase (complex IV, CIV), a multisubunit enzyme composed of a catalytic core of 3 subunits and several supernumerary subunits. The complex exists as a monomer or a dimer and forms supercomplexes (SCs) in the inner mitochondrial membrane with ubiquinol-cytochrome c oxidoreductase (cytochrome b-c1 complex, complex III, CIII). Cu cation is required as a cofactor.

Its subcellular location is the mitochondrion inner membrane. It catalyses the reaction 4 Fe(II)-[cytochrome c] + O2 + 8 H(+)(in) = 4 Fe(III)-[cytochrome c] + 2 H2O + 4 H(+)(out). In terms of biological role, component of the cytochrome c oxidase, the last enzyme in the mitochondrial electron transport chain which drives oxidative phosphorylation. The respiratory chain contains 3 multisubunit complexes succinate dehydrogenase (complex II, CII), ubiquinol-cytochrome c oxidoreductase (cytochrome b-c1 complex, complex III, CIII) and cytochrome c oxidase (complex IV, CIV), that cooperate to transfer electrons derived from NADH and succinate to molecular oxygen, creating an electrochemical gradient over the inner membrane that drives transmembrane transport and the ATP synthase. Cytochrome c oxidase is the component of the respiratory chain that catalyzes the reduction of oxygen to water. Electrons originating from reduced cytochrome c in the intermembrane space (IMS) are transferred via the dinuclear copper A center (CU(A)) of subunit 2 and heme A of subunit 1 to the active site in subunit 1, a binuclear center (BNC) formed by heme A3 and copper B (CU(B)). The BNC reduces molecular oxygen to 2 water molecules using 4 electrons from cytochrome c in the IMS and 4 protons from the mitochondrial matrix. In Choristoneura rosaceana (Oblique banded leafroller), this protein is Cytochrome c oxidase subunit 2 (COII).